The sequence spans 157 residues: Protein Smg homolog (157 aa).

Belongs to the Smg family.

The protein is Protein Smg homolog of Shewanella halifaxensis (strain HAW-EB4).